Consider the following 383-residue polypeptide: Trihelix transcription factor ASIL1 (383 aa).

4 disordered regions span residues 1 to 32 (MEDD…LPTN), 61 to 94 (HTPS…DDCW), 189 to 295 (IASS…SGVG), and 346 to 383 (EITQ…NVSS). The segment covering 66–88 (TGGGGSGNRNGRGGGGGSGGGGG) has biased composition (gly residues). The 60-residue stretch at 94–153 (WSEEATKVLIEAWGDRFSEPGKGTLKQQHWKEVAEIVNKSRQCKYPKTDIQCKNRIDTVK) folds into the Myb-like domain. Polar residues predominate over residues 206–225 (NSRSSMFKRQTKGNQIVQQQ). Positions 226 to 235 (QEKRGSDSMR) are enriched in basic and acidic residues. Residues 228 to 241 (KRGSDSMRWHFRKR) carry the Bipartite nuclear localization signal motif. Over residues 246 to 262 (TESESDPEPEASPEESA) the composition is skewed to acidic residues. Residues 263 to 274 (ESLPPLQPIQPL) are compositionally biased toward low complexity. Residues 304 to 365 (FTEAYEKAET…ERSRQRGERR (62 aa)) are a coiled coil. The segment covering 356–367 (ERSRQRGERRIV) has biased composition (basic and acidic residues).

Its subcellular location is the nucleus. Functionally, transcription repressor that binds specific DNA sequence such as the GT-box-like motif 5'-CGTGATT-3' in the AT2S3 promoter. Negative regulator of seed maturation genes during seed germination and seedling development. May target GT-box-containing embryonic genes by competing with the binding of transcriptional activators to this promoter region. Contributes to the maintenance and control of seed filling and may repress the maturation program during early embryogenesis. In Arabidopsis thaliana (Mouse-ear cress), this protein is Trihelix transcription factor ASIL1.